A 240-amino-acid polypeptide reads, in one-letter code: Ribonuclease PH (240 aa).

Phosphate-binding positions include arginine 87 and 125-127 (GTR).

Belongs to the RNase PH family. Homohexameric ring arranged as a trimer of dimers.

The catalysed reaction is tRNA(n+1) + phosphate = tRNA(n) + a ribonucleoside 5'-diphosphate. Phosphorolytic 3'-5' exoribonuclease that plays an important role in tRNA 3'-end maturation. Removes nucleotide residues following the 3'-CCA terminus of tRNAs; can also add nucleotides to the ends of RNA molecules by using nucleoside diphosphates as substrates, but this may not be physiologically important. Probably plays a role in initiation of 16S rRNA degradation (leading to ribosome degradation) during starvation. In Pseudomonas fluorescens (strain Pf0-1), this protein is Ribonuclease PH.